The primary structure comprises 390 residues: Protein arginine N-methyltransferase 1.1 (390 aa).

A compositionally biased stretch (basic and acidic residues) spans Met-1–Asn-10. The interval Met-1 to Thr-59 is disordered. An SAM-dependent MTase PRMT-type domain is found at Ala-69–Arg-390. Active-site residues include Glu-181 and Glu-190.

Belongs to the class I-like SAM-binding methyltransferase superfamily. Protein arginine N-methyltransferase family. In terms of assembly, interacts with PRMT12, MBD7 and FIB2.

It is found in the nucleus. Its subcellular location is the cytoplasm. It catalyses the reaction L-arginyl-[protein] + 2 S-adenosyl-L-methionine = N(omega),N(omega)-dimethyl-L-arginyl-[protein] + 2 S-adenosyl-L-homocysteine + 2 H(+). Functionally, methylates (mono and asymmetric dimethylation) the guanidino nitrogens of arginyl residues present in a glycine and arginine-rich domain. Type I arginine methyltransferase active on both histones and non-histone proteins. Required for leaves and flowers development. Mediates the methylation of MBD7 and MED36A. The chain is Protein arginine N-methyltransferase 1.1 (PRMT11) from Arabidopsis thaliana (Mouse-ear cress).